We begin with the raw amino-acid sequence, 224 residues long: DNA mismatch repair protein MutH (224 aa).

It belongs to the MutH family.

The protein localises to the cytoplasm. Its function is as follows. Sequence-specific endonuclease that cleaves unmethylated GATC sequences. It is involved in DNA mismatch repair. This Histophilus somni (strain 129Pt) (Haemophilus somnus) protein is DNA mismatch repair protein MutH.